Consider the following 419-residue polypeptide: Alpha-galactosidase A (419 aa).

The N-terminal stretch at 1–31 is a signal peptide; that stretch reads MKLLSRDTRLVCELALCPLALVFWSILGVRA. Cystine bridges form between Cys-52–Cys-94 and Cys-56–Cys-63. A glycan (N-linked (GlcNAc...) asparagine) is linked at Asn-139. A disulfide bond links Cys-142 and Cys-172. Residue Asp-170 is the Nucleophile of the active site. Position 186 is a phosphotyrosine (Tyr-186). N-linked (GlcNAc...) asparagine glycosylation occurs at Asn-192. An intrachain disulfide couples Cys-202 to Cys-223. 203-207 contacts substrate; it reads EWPLY. A glycan (N-linked (GlcNAc...) asparagine) is linked at Asn-215. The active-site Proton donor is the Asp-231. An intrachain disulfide couples Cys-378 to Cys-382.

Belongs to the glycosyl hydrolase 27 family. Homodimer.

Its subcellular location is the lysosome. The catalysed reaction is Hydrolysis of terminal, non-reducing alpha-D-galactose residues in alpha-D-galactosides, including galactose oligosaccharides, galactomannans and galactolipids.. The enzyme catalyses a globoside Gb3Cer (d18:1(4E)) + H2O = a beta-D-Gal-(1-&gt;4)-beta-D-Glc-(1&lt;-&gt;1)-Cer(d18:1(4E)) + D-galactose. It catalyses the reaction a globoside Gb3Cer + H2O = a beta-D-galactosyl-(1-&gt;4)-beta-D-glucosyl-(1&lt;-&gt;1)-ceramide + D-galactose. With respect to regulation, galactosylgalactosylglucosylceramidase activity is stimulated by saposin B and ammonium chloride. Catalyzes the hydrolysis of glycosphingolipids and participates in their degradation in the lysosome. This Mus musculus (Mouse) protein is Alpha-galactosidase A.